A 124-amino-acid polypeptide reads, in one-letter code: Large ribosomal subunit protein uL14 (124 aa).

The protein belongs to the universal ribosomal protein uL14 family. As to quaternary structure, part of the 50S ribosomal subunit. Forms a cluster with proteins L3 and L19. In the 70S ribosome, L14 and L19 interact and together make contacts with the 16S rRNA in bridges B5 and B8.

Its function is as follows. Binds to 23S rRNA. Forms part of two intersubunit bridges in the 70S ribosome. The polypeptide is Large ribosomal subunit protein uL14 (Mycoplasmoides gallisepticum (strain R(low / passage 15 / clone 2)) (Mycoplasma gallisepticum)).